The chain runs to 319 residues: tRNA-cytidine(32) 2-sulfurtransferase (319 aa).

Residues 43-48 (SGGKDS) carry the PP-loop motif motif. Residues Cys118, Cys121, and Cys209 each contribute to the [4Fe-4S] cluster site. Residues 272-297 (DLAFDSEKMPERFSDGSEEDESEIKI) form a disordered region. Basic and acidic residues predominate over residues 276-286 (DSEKMPERFSD).

Belongs to the TtcA family. Homodimer. Requires Mg(2+) as cofactor. It depends on [4Fe-4S] cluster as a cofactor.

The protein localises to the cytoplasm. The enzyme catalyses cytidine(32) in tRNA + S-sulfanyl-L-cysteinyl-[cysteine desulfurase] + AH2 + ATP = 2-thiocytidine(32) in tRNA + L-cysteinyl-[cysteine desulfurase] + A + AMP + diphosphate + H(+). It functions in the pathway tRNA modification. Its function is as follows. Catalyzes the ATP-dependent 2-thiolation of cytidine in position 32 of tRNA, to form 2-thiocytidine (s(2)C32). The sulfur atoms are provided by the cysteine/cysteine desulfurase (IscS) system. This chain is tRNA-cytidine(32) 2-sulfurtransferase, found in Neisseria gonorrhoeae (strain ATCC 700825 / FA 1090).